A 379-amino-acid chain; its full sequence is UDP-4-amino-4-deoxy-L-arabinose--oxoglutarate aminotransferase (379 aa).

Lysine 182 bears the N6-(pyridoxal phosphate)lysine mark.

Belongs to the DegT/DnrJ/EryC1 family. ArnB subfamily. In terms of assembly, homodimer. Pyridoxal 5'-phosphate serves as cofactor.

It carries out the reaction UDP-4-amino-4-deoxy-beta-L-arabinose + 2-oxoglutarate = UDP-beta-L-threo-pentopyranos-4-ulose + L-glutamate. Its pathway is nucleotide-sugar biosynthesis; UDP-4-deoxy-4-formamido-beta-L-arabinose biosynthesis; UDP-4-deoxy-4-formamido-beta-L-arabinose from UDP-alpha-D-glucuronate: step 2/3. The protein operates within bacterial outer membrane biogenesis; lipopolysaccharide biosynthesis. Its function is as follows. Catalyzes the conversion of UDP-4-keto-arabinose (UDP-Ara4O) to UDP-4-amino-4-deoxy-L-arabinose (UDP-L-Ara4N). The modified arabinose is attached to lipid A and is required for resistance to polymyxin and cationic antimicrobial peptides. In Shigella boydii serotype 4 (strain Sb227), this protein is UDP-4-amino-4-deoxy-L-arabinose--oxoglutarate aminotransferase.